Here is a 296-residue protein sequence, read N- to C-terminus: Arginase (296 aa).

4 residues coordinate Mn(2+): His97, Asp120, His122, and Asp124. Residues 122–126 (HGDLN), 133–135 (SGN), and Asp176 each bind substrate. Mn(2+) contacts are provided by Asp223 and Asp225. Positions 237 and 268 each coordinate substrate.

Belongs to the arginase family. The cofactor is Mn(2+).

It carries out the reaction L-arginine + H2O = urea + L-ornithine. Its pathway is nitrogen metabolism; urea cycle; L-ornithine and urea from L-arginine: step 1/1. Its function is as follows. Involved in the catabolism of arginine. This chain is Arginase, found in Bacillus subtilis (strain 168).